Here is a 365-residue protein sequence, read N- to C-terminus: Succinyl-diaminopimelate desuccinylase (365 aa).

His-65 contacts Zn(2+). Asp-67 is an active-site residue. Asp-96 contacts Zn(2+). Catalysis depends on Glu-126, which acts as the Proton acceptor. Residues Glu-127, Glu-155, and His-340 each coordinate Zn(2+).

It belongs to the peptidase M20A family. DapE subfamily. Homodimer. The cofactor is Zn(2+). Co(2+) serves as cofactor.

The catalysed reaction is N-succinyl-(2S,6S)-2,6-diaminopimelate + H2O = (2S,6S)-2,6-diaminopimelate + succinate. It functions in the pathway amino-acid biosynthesis; L-lysine biosynthesis via DAP pathway; LL-2,6-diaminopimelate from (S)-tetrahydrodipicolinate (succinylase route): step 3/3. Catalyzes the hydrolysis of N-succinyl-L,L-diaminopimelic acid (SDAP), forming succinate and LL-2,6-diaminopimelate (DAP), an intermediate involved in the bacterial biosynthesis of lysine and meso-diaminopimelic acid, an essential component of bacterial cell walls. In Campylobacter jejuni subsp. jejuni serotype O:2 (strain ATCC 700819 / NCTC 11168), this protein is Succinyl-diaminopimelate desuccinylase.